The chain runs to 450 residues: UDP-N-acetylmuramoylalanine--D-glutamate ligase (450 aa).

111-117 serves as a coordination point for ATP; sequence GTNGKST.

Belongs to the MurCDEF family.

It localises to the cytoplasm. It catalyses the reaction UDP-N-acetyl-alpha-D-muramoyl-L-alanine + D-glutamate + ATP = UDP-N-acetyl-alpha-D-muramoyl-L-alanyl-D-glutamate + ADP + phosphate + H(+). Its pathway is cell wall biogenesis; peptidoglycan biosynthesis. In terms of biological role, cell wall formation. Catalyzes the addition of glutamate to the nucleotide precursor UDP-N-acetylmuramoyl-L-alanine (UMA). The polypeptide is UDP-N-acetylmuramoylalanine--D-glutamate ligase (Rickettsia bellii (strain RML369-C)).